We begin with the raw amino-acid sequence, 221 residues long: Sugar transporter SWEET1 (221 aa).

The next 7 membrane-spanning stretches (helical) occupy residues alanine 3–phenylalanine 23, valine 42–alanine 62, isoleucine 68–leucine 88, valine 96–tryptophan 116, leucine 129–alanine 149, leucine 160–phenylalanine 180, and tyrosine 186–tryptophan 206. Residues leucine 10–lysine 94 form the MtN3/slv 1 domain. A MtN3/slv 2 domain is found at glutamine 127 to glutamine 212. Residues alanine 149–threonine 221 are mediates interaction with TRPV2.

It belongs to the SWEET sugar transporter family. As to quaternary structure, interacts with TRPV2; the interaction probably occurs intracellularly and depends on TRPV2 N-glycosylation. In terms of tissue distribution, ubiquitously expressed with highest expression in oviduct, epididymis and intestine.

The protein resides in the golgi apparatus membrane. It localises to the cell membrane. Its function is as follows. Mediates sugar transport across membranes. May stimulate V(D)J recombination by the activation of RAG1. This chain is Sugar transporter SWEET1 (SLC50A1), found in Homo sapiens (Human).